The sequence spans 430 residues: Levansucrase Lscgamma (430 aa).

Sucrose is bound by residues tryptophan 60, aspartate 61, alanine 147, arginine 217, and aspartate 218. The Nucleophile role is filled by aspartate 61. Residue glutamate 302 is the Proton donor/acceptor of the active site.

Belongs to the glycosyl hydrolase 68 family. In terms of assembly, homodimer.

The enzyme catalyses [6)-beta-D-fructofuranosyl-(2-&gt;](n) alpha-D-glucopyranoside + sucrose = [6)-beta-D-fructofuranosyl-(2-&gt;](n+1) alpha-D-glucopyranoside + D-glucose. With respect to regulation, sucrose hydrolase activity is negatively affected by salt concentration. The levan polymerization rate increases sharply in relation to sucrose concentration reaching the maximum at 100 mM sucrose, and then steadily decreases, suggesting a strong inhibition of the activity by the substrate. In terms of biological role, catalyzes the synthesis of levan, a fructose polymer, by transferring the fructosyl moiety from sucrose to a growing acceptor molecule. Also displays sucrose hydrolase activity. Can depolymerize the levan produced once substrate is completely exhausted. This Pseudomonas syringae pv. actinidiae protein is Levansucrase Lscgamma.